The following is a 103-amino-acid chain: Putative double-stranded DNA mimic protein APJL_1366 (103 aa).

It belongs to the putative dsDNA mimic protein family.

May act as a double-stranded DNA (dsDNA) mimic. Probably regulates the activity of a dsDNA-binding protein. The polypeptide is Putative double-stranded DNA mimic protein APJL_1366 (Actinobacillus pleuropneumoniae serotype 3 (strain JL03)).